The following is a 243-amino-acid chain: uncharacterized protein (243 aa).

This is an uncharacterized protein from Methanocaldococcus jannaschii (strain ATCC 43067 / DSM 2661 / JAL-1 / JCM 10045 / NBRC 100440) (Methanococcus jannaschii).